Consider the following 627-residue polypeptide: Mitochondrial Rho GTPase 1 (627 aa).

One can recognise a Miro 1 domain in the interval 1–169; the sequence is MATVRICVCG…FFLCQKAVTH (169 aa). Residues 1 to 599 are Cytoplasmic-facing; the sequence is MATVRICVCG…PRSNEEGPDR (599 aa). GTP is bound by residues 10-17, 58-62, and 114-117; these read GDESTGKS, DTSAR, and NKSD. EF-hand domains are found at residues 185-220 and 305-340; these read LCINALKRIFYLCDKDQDGYLNEQEMRDFQARCFDK and AGYRFFVDLFLIFDKDNDGGLNDEELEALFAPAPGL. Ca(2+) is bound by residues D198, D200, D202, Y204, E209, D318, D320, D322, and E329. The Miro 2 domain occupies 420–584; it reads RNVVLCYVLG…FVAYADAATT (165 aa). Residues 429–436, 465–469, and 534–537 contribute to the GTP site; these read GASGAGKS, ELPGG, and LKAD. Residues 600–620 form a helical; Anchor for type IV membrane protein membrane-spanning segment; the sequence is TSLYIALGATACAGVAALTIW. The Mitochondrial intermembrane portion of the chain corresponds to 621–627; the sequence is RRATNAL.

The protein belongs to the mitochondrial Rho GTPase family.

The protein resides in the mitochondrion outer membrane. In terms of biological role, mitochondrial GTPase involved in mitochondrial trafficking. Probably involved in control of anterograde transport of mitochondria and their subcellular distribution. The protein is Mitochondrial Rho GTPase 1 (GEM1) of Gibberella zeae (strain ATCC MYA-4620 / CBS 123657 / FGSC 9075 / NRRL 31084 / PH-1) (Wheat head blight fungus).